A 354-amino-acid chain; its full sequence is Methionine import ATP-binding protein MetN (354 aa).

Residues 8-250 enclose the ABC transporter domain; it reads LDHIDITFHQ…PREDLTKDFI (243 aa). 42 to 49 contacts ATP; it reads GYSGAGKS.

The protein belongs to the ABC transporter superfamily. Methionine importer (TC 3.A.1.24) family. In terms of assembly, the complex is composed of two ATP-binding proteins (MetN), two transmembrane proteins (MetI) and a solute-binding protein (MetQ).

It is found in the cell membrane. It catalyses the reaction L-methionine(out) + ATP + H2O = L-methionine(in) + ADP + phosphate + H(+). It carries out the reaction D-methionine(out) + ATP + H2O = D-methionine(in) + ADP + phosphate + H(+). Part of the ABC transporter complex MetNIQ involved in methionine import. Responsible for energy coupling to the transport system. The polypeptide is Methionine import ATP-binding protein MetN (Streptococcus mutans serotype c (strain ATCC 700610 / UA159)).